Here is a 157-residue protein sequence, read N- to C-terminus: SsrA-binding protein (157 aa).

Positions 131-157 (KQLHDKRESVKQRDWQRDKARLMRDKG) are disordered. Over residues 132 to 157 (QLHDKRESVKQRDWQRDKARLMRDKG) the composition is skewed to basic and acidic residues.

Belongs to the SmpB family.

It localises to the cytoplasm. In terms of biological role, required for rescue of stalled ribosomes mediated by trans-translation. Binds to transfer-messenger RNA (tmRNA), required for stable association of tmRNA with ribosomes. tmRNA and SmpB together mimic tRNA shape, replacing the anticodon stem-loop with SmpB. tmRNA is encoded by the ssrA gene; the 2 termini fold to resemble tRNA(Ala) and it encodes a 'tag peptide', a short internal open reading frame. During trans-translation Ala-aminoacylated tmRNA acts like a tRNA, entering the A-site of stalled ribosomes, displacing the stalled mRNA. The ribosome then switches to translate the ORF on the tmRNA; the nascent peptide is terminated with the 'tag peptide' encoded by the tmRNA and targeted for degradation. The ribosome is freed to recommence translation, which seems to be the essential function of trans-translation. This Methylorubrum populi (strain ATCC BAA-705 / NCIMB 13946 / BJ001) (Methylobacterium populi) protein is SsrA-binding protein.